Consider the following 941-residue polypeptide: Putative helicase 121R (941 aa).

A coiled-coil region spans residues 285 to 323; sequence LKQELKDIEGENSETIKRNLKDAKDLLKILNKKRANEYN. The disordered stretch occupies residues 492-514; sequence DDSGRDSEEDSQEEEVSSSQEQL. Residues 498–507 show a composition bias toward acidic residues; that stretch reads SEEDSQEEEV. Residues 609–791 form the SF3 helicase domain; that stretch reads EEVLELYNFL…FVAREKCPET (183 aa). ATP is bound at residue 653 to 660; it reads GNGNNGKS.

This sequence belongs to the IIV-6 184L family.

The sequence is that of Putative helicase 121R from Invertebrate iridescent virus 3 (IIV-3).